Consider the following 227-residue polypeptide: ATP synthase F(0) complex subunit a (227 aa).

The next 6 helical transmembrane spans lie at 14–34 (LLGI…FPTP), 69–89 (WATI…LGLL), 99–119 (LSLN…IGML), 137–157 (LLIP…PLAL), 180–200 (FVLI…LFLL), and 202–222 (ILEV…LSLY).

This sequence belongs to the ATPase A chain family. As to quaternary structure, component of the ATP synthase complex composed at least of ATP5F1A/subunit alpha, ATP5F1B/subunit beta, ATP5MC1/subunit c (homooctomer), MT-ATP6/subunit a, MT-ATP8/subunit 8, ATP5ME/subunit e, ATP5MF/subunit f, ATP5MG/subunit g, ATP5MK/subunit k, ATP5MJ/subunit j, ATP5F1C/subunit gamma, ATP5F1D/subunit delta, ATP5F1E/subunit epsilon, ATP5PF/subunit F6, ATP5PB/subunit b, ATP5PD/subunit d, ATP5PO/subunit OSCP. ATP synthase complex consists of a soluble F(1) head domain (subunits alpha(3) and beta(3)) - the catalytic core - and a membrane F(0) domain - the membrane proton channel (subunits c, a, 8, e, f, g, k and j). These two domains are linked by a central stalk (subunits gamma, delta, and epsilon) rotating inside the F1 region and a stationary peripheral stalk (subunits F6, b, d, and OSCP). Interacts with DNAJC30; interaction is direct.

Its subcellular location is the mitochondrion inner membrane. It carries out the reaction H(+)(in) = H(+)(out). Its function is as follows. Subunit a, of the mitochondrial membrane ATP synthase complex (F(1)F(0) ATP synthase or Complex V) that produces ATP from ADP in the presence of a proton gradient across the membrane which is generated by electron transport complexes of the respiratory chain. ATP synthase complex consist of a soluble F(1) head domain - the catalytic core - and a membrane F(1) domain - the membrane proton channel. These two domains are linked by a central stalk rotating inside the F(1) region and a stationary peripheral stalk. During catalysis, ATP synthesis in the catalytic domain of F(1) is coupled via a rotary mechanism of the central stalk subunits to proton translocation. With the subunit c (ATP5MC1), forms the proton-conducting channel in the F(0) domain, that contains two crucial half-channels (inlet and outlet) that facilitate proton movement from the mitochondrial intermembrane space (IMS) into the matrix. Protons are taken up via the inlet half-channel and released through the outlet half-channel, following a Grotthuss mechanism. The sequence is that of ATP synthase F(0) complex subunit a from Squalus acanthias (Spiny dogfish).